A 390-amino-acid chain; its full sequence is S-adenosylmethionine synthase (390 aa).

Residue His17 coordinates ATP. Asp19 provides a ligand contact to Mg(2+). Glu45 is a binding site for K(+). L-methionine contacts are provided by Glu58 and Gln101. The tract at residues 101–111 (QSPDIGQGVDT) is flexible loop. ATP is bound by residues 160–162 (DGK), 226–227 (RF), Asp235, 241–242 (RK), Ala258, and Lys262. Residue Asp235 participates in L-methionine binding. Lys266 is an L-methionine binding site.

This sequence belongs to the AdoMet synthase family. As to quaternary structure, homotetramer; dimer of dimers. Requires Mg(2+) as cofactor. The cofactor is K(+).

It localises to the cytoplasm. It carries out the reaction L-methionine + ATP + H2O = S-adenosyl-L-methionine + phosphate + diphosphate. It functions in the pathway amino-acid biosynthesis; S-adenosyl-L-methionine biosynthesis; S-adenosyl-L-methionine from L-methionine: step 1/1. Its function is as follows. Catalyzes the formation of S-adenosylmethionine (AdoMet) from methionine and ATP. The overall synthetic reaction is composed of two sequential steps, AdoMet formation and the subsequent tripolyphosphate hydrolysis which occurs prior to release of AdoMet from the enzyme. This Anaeromyxobacter dehalogenans (strain 2CP-1 / ATCC BAA-258) protein is S-adenosylmethionine synthase.